Consider the following 208-residue polypeptide: LexA repressor (208 aa).

Residues 30–50 (VREICAAVKLSSTSTVHGHLA) constitute a DNA-binding region (H-T-H motif). Active-site for autocatalytic cleavage activity residues include Ser-129 and Lys-167.

Belongs to the peptidase S24 family. Homodimer.

It catalyses the reaction Hydrolysis of Ala-|-Gly bond in repressor LexA.. Its function is as follows. Represses a number of genes involved in the response to DNA damage (SOS response), including recA and lexA. In the presence of single-stranded DNA, RecA interacts with LexA causing an autocatalytic cleavage which disrupts the DNA-binding part of LexA, leading to derepression of the SOS regulon and eventually DNA repair. This chain is LexA repressor, found in Lactobacillus helveticus (strain DPC 4571).